Reading from the N-terminus, the 556-residue chain is Aplysianin-A (556 aa).

Positions 1–19 (MAVRFLALGLLIFVTSCSG) are cleaved as a signal peptide. Residues N150, N177, N374, N399, N414, and N430 are each glycosylated (N-linked (GlcNAc...) asparagine).

The protein to A.fulica achacin protein. Homotetramer. As to expression, albumen gland.

In terms of biological role, has antibacterial activity against Gram-negative and Gram-positive bacteria. The protein is Aplysianin-A of Aplysia kurodai (Kuroda's sea hare).